The sequence spans 561 residues: DISARM protein DrmB (561 aa).

It localises to the cytoplasm. Component of antiviral defense system DISARM (defense island system associated with restriction-modification), composed of DrmE, DrmA, DrmB, DrmC and DrmMII. DISARM is probably a multi-gene restriction module, this subunit has an unknown function. Expression of DISARM in B.subtilis (strain BEST7003) confers resistance to phages Nf, phi29, phi105, phi3T, SPO1, SPR and SPP1. Protection is over 10(7)-fold against phi3T, 10(4)-10(5)-fold against Nf, phi29, phi105 and SPR, 100-fold against SPO1 and 10-fold against SPP1. DISARM does not interfere with phage adsorption, but instead interferes with (phi3T) DNA replication early in its cycle, preventing replication, circularization and lysogeny and probably causes phage DNA degradation (DNA is degraded in SPP1-infected cells). This is DISARM protein DrmB from Bacillus paralicheniformis (strain ATCC 9945a / NCIMB 11709 / CD-2).